The primary structure comprises 359 residues: Type-1 angiotensin II receptor (359 aa).

At 1–25 (MILNSSTEDGIKRIQDDCPKAGRHN) the chain is on the extracellular side. Residue asparagine 4 is glycosylated (N-linked (GlcNAc...) (complex) asparagine). Angiotensin II contacts are provided by glutamine 15 and aspartate 17. Cystine bridges form between cysteine 18-cysteine 274 and cysteine 101-cysteine 180. Residues 26–55 (YIFVMIPTLYSIIFVVGIFGNSLVVIVIYF) traverse the membrane as a helical segment. Topologically, residues 56–61 (YMKLKT) are cytoplasmic. Residues 62 to 89 (VASVFLLNLALADLCFLLTLPLWAVYTA) form a helical membrane-spanning segment. Residues 90–98 (MEYRWPFGN) lie on the Extracellular side of the membrane. Residues 99–125 (YLCKIASASVSFNLYASVFLLTCLSID) traverse the membrane as a helical segment. Residues 126-141 (RYLAIVHPMKSRLRRT) are Cytoplasmic-facing. Residues 142–165 (MLVAKVTCIIIWLLAGLASLPAII) traverse the membrane as a helical segment. Over 166 to 190 (HRNVFFIENTNITVCAFHYESQNST) the chain is Extracellular. Arginine 167 serves as a coordination point for angiotensin II. N-linked (GlcNAc...) asparagine glycosylation is present at asparagine 176. Phenylalanine 182, histidine 183, and tyrosine 184 together coordinate angiotensin II. An N-linked (GlcNAc...) asparagine glycan is attached at asparagine 188. The chain crosses the membrane as a helical span at residues 191 to 216 (LPIGLGLTKNILGFLFPFLIILTSYT). Residue lysine 199 participates in angiotensin II binding. Residues 217-239 (LIWKALKKAYEIQKNKPRNDDIF) are Cytoplasmic-facing. The helical transmembrane segment at 240–268 (KIIMAIVLFFFFSWIPHQIFTFLDVLIQL) threads the bilayer. Residues 269–278 (GIIRDCRIAD) lie on the Extracellular side of the membrane. Residues 279–304 (IVDTAMPITICIAYFNNCLNPLFYGF) traverse the membrane as a helical segment. Topologically, residues 305–359 (LGKKFKRYFLQLLKYIPPKAKSHSNLSTKMSTLSYRPSDNVSSSTKKPAPCFEVE) are cytoplasmic. Residues 335 to 350 (STLSYRPSDNVSSSTK) show a composition bias toward polar residues. The disordered stretch occupies residues 335-359 (STLSYRPSDNVSSSTKKPAPCFEVE). Cysteine 355 carries S-palmitoyl cysteine lipidation.

This sequence belongs to the G-protein coupled receptor 1 family. In terms of assembly, interacts with MAS1. Interacts with ARRB1. Interacts with FLNA (via filamin repeat 21); increases PKA-mediated phosphorylation of FLNA. Post-translationally, C-terminal Ser or Thr residues may be phosphorylated. As to expression, liver, lung, adrenal and adrenocortical adenomas.

It localises to the cell membrane. With respect to regulation, strongly inhibited by anti-hypertensive drugs losartan, candesartan, valsartan, irbesartan, telmisartan, eprosartan, olmesartan and azilsartan, most of which share a common biphenyl-tetrazole scaffold. Its function is as follows. Receptor for angiotensin II, a vasoconstricting peptide, which acts as a key regulator of blood pressure and sodium retention by the kidney. The activated receptor in turn couples to G-alpha proteins G(q) (GNAQ, GNA11, GNA14 or GNA15) and thus activates phospholipase C and increases the cytosolic Ca(2+) concentrations, which in turn triggers cellular responses such as stimulation of protein kinase C. In terms of biological role, (Microbial infection) During SARS coronavirus-2/SARS-CoV-2 infection, it is able to recognize and internalize the complex formed by secreted ACE2 and SARS-CoV-2 spike protein through DNM2/dynamin 2-dependent endocytosis. In Homo sapiens (Human), this protein is Type-1 angiotensin II receptor.